The chain runs to 784 residues: ATP-dependent 6-phosphofructokinase, platelet type (784 aa).

N-acetylmethionine is present on M1. The tract at residues 1-398 (MSDLDSSSSS…NLNTYKRLAI (398 aa)) is N-terminal catalytic PFK domain 1. Residues S2, S6, and S20 each carry the phosphoserine modification. Residues G33, 96 to 97 (RC), and 126 to 129 (GDGS) contribute to the ATP site. D127 is a binding site for Mg(2+). At S141 the chain carries Phosphoserine. Residues 172–174 (SID), R209, 216–218 (MGR), E272, R300, and 306–309 (HVQR) each bind substrate. The active-site Proton acceptor is D174. K394 carries the N6-acetyllysine modification. Residues 399 to 410 (KLPDEKIVKSNC) form an interdomain linker region. The interval 411–784 (NVAVINVGAP…LESLQHHEEL (374 aa)) is C-terminal regulatory PFK domain 2. Position 480 (R480) interacts with beta-D-fructose 2,6-bisphosphate. K485 carries the N6-acetyllysine modification. Beta-D-fructose 2,6-bisphosphate contacts are provided by residues 537–541 (TVSNN), R575, 582–584 (MGG), and E638. S539 is a glycosylation site (O-linked (GlcNAc) serine). Position 650 is a phosphotyrosine (Y650). Residues R664 and 670 to 673 (HMQQ) each bind beta-D-fructose 2,6-bisphosphate. N6-acetyllysine is present on K687. R743 contributes to the beta-D-fructose 2,6-bisphosphate binding site.

It belongs to the phosphofructokinase type A (PFKA) family. ATP-dependent PFK group I subfamily. Eukaryotic two domain clade 'E' sub-subfamily. In terms of assembly, homo- and heterotetramers. Phosphofructokinase (PFK) enzyme functions as a tetramer composed of different combinations of 3 types of subunits, called PFKM (M), PFKL (L) and PFKP (P). The composition of the PFK tetramer differs according to the tissue type it is present in. The kinetic and regulatory properties of the tetrameric enzyme are dependent on the subunit composition, hence can vary across tissues. Interacts with ATG4B; promoting phosphorylation of ATG4B. Mg(2+) serves as cofactor. GlcNAcylation decreases enzyme activity. Expression is constant during tumor growth and markedly decreases when cell proliferation stops.

The protein resides in the cytoplasm. The catalysed reaction is beta-D-fructose 6-phosphate + ATP = beta-D-fructose 1,6-bisphosphate + ADP + H(+). The protein operates within carbohydrate degradation; glycolysis; D-glyceraldehyde 3-phosphate and glycerone phosphate from D-glucose: step 3/4. With respect to regulation, allosterically activated by ADP, AMP, or fructose 2,6-bisphosphate, and allosterically inhibited by ATP or citrate. Catalyzes the phosphorylation of D-fructose 6-phosphate to fructose 1,6-bisphosphate by ATP, the first committing step of glycolysis. This chain is ATP-dependent 6-phosphofructokinase, platelet type (Pfkp), found in Mus musculus (Mouse).